A 734-amino-acid chain; its full sequence is MELRFPRFSQGLAQDPTTRRIWFGIATAHDFESHDDITEERLYQNIFASHFGQLAIIFLWTSGNLFHVAWQGNFESWIQDPLHVRPIAHAIWDPHFGQPAVEAFTRGGAAGPVNIAYSGVYQWWYTIGLRTNEDLYTGALFLLFLSTLSLVAGWLHLQPKWKPSLSWFKNAESRLNHHLSGLFGVSSLAWTGHLVHVAIPASRGEYVRWNNFLDVLPYPQGLGPLLTGQWNLYAQNPDSSNHLFGTAQGAGTAILTLLGGFHPQTQSLWLTDIAHHHLAIAFIFLIAGHMYRTNFGIGHSIKDLLEAHTPPGGRLGRGHKGLYDTINNSIHFQLGLALASLGVITSLVAQHMYSLPAYAFIAQDFTTQAALYTHHQYIAGFIMTGAFAHGAIFFIRDYNPEQNEDNVLARMLDHKEAIISHLSWASLFLGFHTLGLYVHNDVMLAFGTPEKQILIEPIFAQWIQSAHGKTTYGFDILLSSTNGPAFNAGRSLWLPGWLNAVNENSNSLFLTIGPGDFLVHHAIALGLHTTTLILVKGALDARGSKLMPDKKDFGYSFPCDGPGRGGTCDISAWDAFYLAVFWMLNTIGWVTFYWHWKHITLWQGNVSQFNESSTYLMGWLRDYLWLNSSQLINGYNPFGMNSLSVWAWMFLFGHLVWATGFMFLISWRGYWQELIETLAWAHERTPLANLIRWRDKPVALSIVQARLVGLAHFSVGYIFTYAAFLIASTSGKFG.

A run of 8 helical transmembrane segments spans residues 46 to 69, 135 to 158, 175 to 199, 273 to 291, 330 to 353, 369 to 395, 417 to 439, and 517 to 535; these read IFASHFGQLAIIFLWTSGNLFHVA, LYTGALFLLFLSTLSLVAGWLHLQ, LNHHLSGLFGVSSLAWTGHLVHVAI, IAHHHLAIAFIFLIAGHMY, IHFQLGLALASLGVITSLVAQHMY, AALYTHHQYIAGFIMTGAFAHGAIFFI, AIISHLSWASLFLGFHTLGLYVH, and FLVHHAIALGLHTTTLILV. Residues Cys559 and Cys568 each contribute to the [4Fe-4S] cluster site. The next 2 membrane-spanning stretches (helical) occupy residues 575–596 and 643–665; these read AFYLAVFWMLNTIGWVTFYWHW and LSVWAWMFLFGHLVWATGFMFLI. Positions 654, 662, and 670 each coordinate chlorophyll a. Trp671 contacts phylloquinone. A helical transmembrane segment spans residues 707–727; that stretch reads LVGLAHFSVGYIFTYAAFLIA.

This sequence belongs to the PsaA/PsaB family. The PsaA/B heterodimer binds the P700 chlorophyll special pair and subsequent electron acceptors. PSI consists of a core antenna complex that captures photons, and an electron transfer chain that converts photonic excitation into a charge separation. The eukaryotic PSI reaction center is composed of at least 11 subunits. P700 is a chlorophyll a/chlorophyll a' dimer, A0 is one or more chlorophyll a, A1 is one or both phylloquinones and FX is a shared 4Fe-4S iron-sulfur center. is required as a cofactor.

Its subcellular location is the plastid. It localises to the chloroplast thylakoid membrane. It catalyses the reaction reduced [plastocyanin] + hnu + oxidized [2Fe-2S]-[ferredoxin] = oxidized [plastocyanin] + reduced [2Fe-2S]-[ferredoxin]. In terms of biological role, psaA and PsaB bind P700, the primary electron donor of photosystem I (PSI), as well as the electron acceptors A0, A1 and FX. PSI is a plastocyanin-ferredoxin oxidoreductase, converting photonic excitation into a charge separation, which transfers an electron from the donor P700 chlorophyll pair to the spectroscopically characterized acceptors A0, A1, FX, FA and FB in turn. Oxidized P700 is reduced on the lumenal side of the thylakoid membrane by plastocyanin. The chain is Photosystem I P700 chlorophyll a apoprotein A2 from Agrostis stolonifera (Creeping bentgrass).